A 727-amino-acid chain; its full sequence is MLRIPVRKALVGLSKSPKGCVRTTATAASNLIEVFVDGQSVMVEPGTTVLQACEKVGMQIPRFCYHERLSVAGNCRMCLVEIEKAPKVVAACAMPVMKGWNILTNSEKSKKAREGVMEFLLANHPLDCPICDQGGECDLQDQSMMFGNDRSRFLEGKRAVEDKNIGPLVKTIMTRCIQCTRCIRFASEIAGVDDLGTTGRGNDMQVGTYIEKMFMSELSGNIIDICPVGALTSKPYAFTARPWETRKTESIDVMDAVGSNIVVSTRTGEVMRILPRMHEDINEEWISDKTRFAYDGLKRQRLTEPMIRNEKGLLTYTSWEDALSRVAGMLQSFQGKDVAAIAGGLVDAEALVALKDLLNRVDSDTLCTEEVFPTAGAGTDLRSNYLLNTTIAGVEEADVVLLVGTNPRFEVPLFNARIRKSWLHNDLKVALIGSPVDLTYRYDHLGDSPKILQDIASGSHPFSQVLKEAKKPMVVLGSSALQRNDGAAILAAVSSIAQKIRMTSGVTGDWKVMNILHRIASQVAALDLGYKPGVEAIRKNPPKVLFLLGADGGCITRQDLPKDCFIIYQGHHGDVGAPIADVILPGAAYTEKSATYVNTEGRAQQTKVAVTPPGLAREDWKIIRALSEIAGITLPYDTLDQVRNRLEEVSPNLVRYDDIEGANYFQQANELSKLVNQQLLADPLVPPQLTIKDFYMTDSISRASQTMAKCVKAVTEGAQAVEEPSIC.

Residues 1–23 constitute a mitochondrion transit peptide; it reads MLRIPVRKALVGLSKSPKGCVRT. The 2Fe-2S ferredoxin-type domain maps to 30–108; that stretch reads NLIEVFVDGQ…GWNILTNSEK (79 aa). Residues C64, C75, and C78 each contribute to the [2Fe-2S] cluster site. K84 is modified (N6-acetyllysine). Residue C92 participates in [2Fe-2S] cluster binding. The 40-residue stretch at 108–147 folds into the 4Fe-4S His(Cys)3-ligated-type domain; that stretch reads KSKKAREGVMEFLLANHPLDCPICDQGGECDLQDQSMMFG. H124, C128, C131, C137, C176, C179, C182, and C226 together coordinate [4Fe-4S] cluster. The 4Fe-4S Mo/W bis-MGD-type domain maps to 245–301; it reads TRKTESIDVMDAVGSNIVVSTRTGEVMRILPRMHEDINEEWISDKTRFAYDGLKRQR. Residues K467, K499, and K709 each carry the N6-acetyllysine modification.

It belongs to the complex I 75 kDa subunit family. In terms of assembly, core subunit of respiratory chain NADH dehydrogenase (Complex I) which is composed of 45 different subunits. This is the largest subunit of complex I and it is a component of the iron-sulfur (IP) fragment of the enzyme. Complex I associates with ubiquinol-cytochrome reductase complex (Complex III) to form supercomplexes. Interacts with MDM2 and AKAP1. The cofactor is [2Fe-2S] cluster. [4Fe-4S] cluster serves as cofactor.

The protein resides in the mitochondrion inner membrane. The catalysed reaction is a ubiquinone + NADH + 5 H(+)(in) = a ubiquinol + NAD(+) + 4 H(+)(out). Its function is as follows. Core subunit of the mitochondrial membrane respiratory chain NADH dehydrogenase (Complex I) which catalyzes electron transfer from NADH through the respiratory chain, using ubiquinone as an electron acceptor. Essential for catalysing the entry and efficient transfer of electrons within complex I. Plays a key role in the assembly and stability of complex I and participates in the association of complex I with ubiquinol-cytochrome reductase complex (Complex III) to form supercomplexes. This Macaca fascicularis (Crab-eating macaque) protein is NADH-ubiquinone oxidoreductase 75 kDa subunit, mitochondrial (NDUFS1).